The primary structure comprises 85 residues: Large ribosomal subunit protein bL27 (85 aa).

The interval 1–23 (MAHKKAGGSSRNGRDSESKRLGV) is disordered.

Belongs to the bacterial ribosomal protein bL27 family.

This Nitrosococcus oceani (strain ATCC 19707 / BCRC 17464 / JCM 30415 / NCIMB 11848 / C-107) protein is Large ribosomal subunit protein bL27.